Reading from the N-terminus, the 100-residue chain is Sec-independent protein translocase protein TatA (100 aa).

The helical transmembrane segment at 1 to 21 (MGALKPWHIAVLVVVLILLFG) threads the bilayer. Over residues 44–55 (KSLHDDDRDLAE) the composition is skewed to basic and acidic residues. The disordered stretch occupies residues 44-100 (KSLHDDDRDLAEKANAQAGYQPLPPQVQQEPYPQQTPYQAPPQQQPVVDPVQRARDS). Positions 69–81 (QVQQEPYPQQTPY) are enriched in low complexity.

The protein belongs to the TatA/E family. In terms of assembly, the Tat system comprises two distinct complexes: a TatABC complex, containing multiple copies of TatA, TatB and TatC subunits, and a separate TatA complex, containing only TatA subunits. Substrates initially bind to the TatABC complex, which probably triggers association of the separate TatA complex to form the active translocon.

It localises to the cell membrane. Part of the twin-arginine translocation (Tat) system that transports large folded proteins containing a characteristic twin-arginine motif in their signal peptide across membranes. TatA could form the protein-conducting channel of the Tat system. The protein is Sec-independent protein translocase protein TatA of Salinispora arenicola (strain CNS-205).